A 155-amino-acid polypeptide reads, in one-letter code: Small ribosomal subunit protein uS7cz/uS7cy (155 aa).

This sequence belongs to the universal ribosomal protein uS7 family. As to quaternary structure, part of the 30S ribosomal subunit.

The protein localises to the plastid. Its subcellular location is the chloroplast. One of the primary rRNA binding proteins, it binds directly to 16S rRNA where it nucleates assembly of the head domain of the 30S subunit. The sequence is that of Small ribosomal subunit protein uS7cz/uS7cy (rps7-A) from Daucus carota (Wild carrot).